The chain runs to 209 residues: Amelotin (209 aa).

Positions Met1–Ser16 are cleaved as a signal peptide. Positions Ala142 to Gln209 are disordered.

It belongs to the amelotin family. In terms of processing, phosphorylated by FAM20C in vitro. Post-translationally, O-glycosylated.

It localises to the secreted. Its function is as follows. Is a promoter of calcium phosphate mineralization, playing a critical role in the formation of the compact, mineralized, aprismatic enamel surface layer during the maturation stage of amelogenesis. This chain is Amelotin (AMTN), found in Homo sapiens (Human).